Reading from the N-terminus, the 428-residue chain is Probable dual-specificity RNA methyltransferase RlmN 2 (428 aa).

Glu-142 serves as the catalytic Proton acceptor. The Radical SAM core domain occupies 148–414 (FAGRATACVS…STVRQRRGID (267 aa)). Cys-155 and Cys-419 are oxidised to a cystine. Residues Cys-162, Cys-166, and Cys-169 each contribute to the [4Fe-4S] cluster site. Over residues 207–228 (MRDPSPGREAGEKSRDEADRHR) the composition is skewed to basic and acidic residues. The tract at residues 207-232 (MRDPSPGREAGEKSRDEADRHRAPPT) is disordered. Residues 244–245 (GE), Ser-276, 299–301 (SLH), and Asn-375 each bind S-adenosyl-L-methionine. The active-site S-methylcysteine intermediate is Cys-419.

It belongs to the radical SAM superfamily. RlmN family. [4Fe-4S] cluster serves as cofactor.

The protein localises to the cytoplasm. It carries out the reaction adenosine(2503) in 23S rRNA + 2 reduced [2Fe-2S]-[ferredoxin] + 2 S-adenosyl-L-methionine = 2-methyladenosine(2503) in 23S rRNA + 5'-deoxyadenosine + L-methionine + 2 oxidized [2Fe-2S]-[ferredoxin] + S-adenosyl-L-homocysteine. The catalysed reaction is adenosine(37) in tRNA + 2 reduced [2Fe-2S]-[ferredoxin] + 2 S-adenosyl-L-methionine = 2-methyladenosine(37) in tRNA + 5'-deoxyadenosine + L-methionine + 2 oxidized [2Fe-2S]-[ferredoxin] + S-adenosyl-L-homocysteine. Its function is as follows. Specifically methylates position 2 of adenine 2503 in 23S rRNA and position 2 of adenine 37 in tRNAs. The protein is Probable dual-specificity RNA methyltransferase RlmN 2 of Opitutus terrae (strain DSM 11246 / JCM 15787 / PB90-1).